The primary structure comprises 119 residues: Protein yippee-like 3 (119 aa).

Residues 19-116 (RRYSCVHCRA…IELSHMIKDN (98 aa)) form the Yippee domain. 4 residues coordinate Zn(2+): Cys-23, Cys-26, Cys-79, and Cys-82.

Belongs to the yippee family.

Its subcellular location is the nucleus. It is found in the nucleolus. In terms of biological role, may be involved in proliferation and apoptosis in myeloid precursor cells. The protein is Protein yippee-like 3 (ypel3) of Oryzias latipes (Japanese rice fish).